We begin with the raw amino-acid sequence, 203 residues long: Probable GTP-binding protein EngB (203 aa).

One can recognise an EngB-type G domain in the interval 24 to 199; the sequence is DGSEVAFAGR…HTVIETWLGL (176 aa). GTP is bound by residues 32–39, 59–63, 77–80, 144–147, and 178–180; these read GRSNAGKS, GRTQQ, DLPG, TKAD, and FSS. Residues Ser39 and Thr61 each contribute to the Mg(2+) site.

It belongs to the TRAFAC class TrmE-Era-EngA-EngB-Septin-like GTPase superfamily. EngB GTPase family. The cofactor is Mg(2+).

Functionally, necessary for normal cell division and for the maintenance of normal septation. The sequence is that of Probable GTP-binding protein EngB from Xylella fastidiosa (strain 9a5c).